Here is a 158-residue protein sequence, read N- to C-terminus: Protein-export protein SecB (158 aa).

Belongs to the SecB family. In terms of assembly, homotetramer, a dimer of dimers. One homotetramer interacts with 1 SecA dimer.

Its subcellular location is the cytoplasm. Functionally, one of the proteins required for the normal export of preproteins out of the cell cytoplasm. It is a molecular chaperone that binds to a subset of precursor proteins, maintaining them in a translocation-competent state. It also specifically binds to its receptor SecA. The chain is Protein-export protein SecB from Photorhabdus laumondii subsp. laumondii (strain DSM 15139 / CIP 105565 / TT01) (Photorhabdus luminescens subsp. laumondii).